The following is a 335-amino-acid chain: Acetyl-coenzyme A carboxylase carboxyl transferase subunit alpha (335 aa).

Residues 40–294 (QLETLATRRR…KEAIEKHLDT (255 aa)) form the CoA carboxyltransferase C-terminal domain.

Belongs to the AccA family. As to quaternary structure, acetyl-CoA carboxylase is a heterohexamer composed of biotin carboxyl carrier protein (AccB), biotin carboxylase (AccC) and two subunits each of ACCase subunit alpha (AccA) and ACCase subunit beta (AccD).

The protein resides in the cytoplasm. The enzyme catalyses N(6)-carboxybiotinyl-L-lysyl-[protein] + acetyl-CoA = N(6)-biotinyl-L-lysyl-[protein] + malonyl-CoA. It participates in lipid metabolism; malonyl-CoA biosynthesis; malonyl-CoA from acetyl-CoA: step 1/1. Its function is as follows. Component of the acetyl coenzyme A carboxylase (ACC) complex. First, biotin carboxylase catalyzes the carboxylation of biotin on its carrier protein (BCCP) and then the CO(2) group is transferred by the carboxyltransferase to acetyl-CoA to form malonyl-CoA. The chain is Acetyl-coenzyme A carboxylase carboxyl transferase subunit alpha from Prochlorococcus marinus (strain MIT 9312).